A 156-amino-acid chain; its full sequence is Translation initiation factor IF-1, chloroplastic (156 aa).

Positions 1 to 35 are disordered; the sequence is MAASLTLMTSPPCSRSSKSPSPSPSPSLSCNQQQQ. The transit peptide at 1-49 directs the protein to the chloroplast; it reads MAASLTLMTSPPCSRSSKSPSPSPSPSLSCNQQQQYKPLLHHQWPPQIS. Over residues 10-20 the composition is skewed to low complexity; the sequence is SPPCSRSSKSP. Residues 72–148 enclose the S1-like domain; it reads GGSPSVQEQK…TRGRITYRLR (77 aa).

This sequence belongs to the IF-1 family. In terms of assembly, component of the 30S ribosomal translation pre-initiation complex which assembles on the 30S ribosome in the order IF-2 and IF-3, IF-1 and N-formylmethionyl-tRNA(fMet); mRNA recruitment can occur at any time during PIC assembly.

The protein resides in the plastid. It is found in the chloroplast. Its function is as follows. One of the essential components for the initiation of protein synthesis. Stabilizes the binding of IF-2 and IF-3 on the 30S subunit to which N-formylmethionyl-tRNA(fMet) subsequently binds. Helps modulate mRNA selection, yielding the 30S pre-initiation complex (PIC). Upon addition of the 50S ribosomal subunit IF-1, IF-2 and IF-3 are released leaving the mature 70S translation initiation complex. The chain is Translation initiation factor IF-1, chloroplastic (infA) from Mesembryanthemum crystallinum (Common ice plant).